We begin with the raw amino-acid sequence, 246 residues long: tRNA pseudouridine synthase A (246 aa).

Asp52 acts as the Nucleophile in catalysis. Tyr111 is a binding site for substrate.

The protein belongs to the tRNA pseudouridine synthase TruA family. Homodimer.

It catalyses the reaction uridine(38/39/40) in tRNA = pseudouridine(38/39/40) in tRNA. In terms of biological role, formation of pseudouridine at positions 38, 39 and 40 in the anticodon stem and loop of transfer RNAs. This chain is tRNA pseudouridine synthase A, found in Ehrlichia ruminantium (strain Gardel).